We begin with the raw amino-acid sequence, 180 residues long: MSRIGVKPIIIPAGVEVTIAEGNLVTVKGPKGTLTKQLSAELNIKKEENTIMVERPTDNKKHRSLHGLTRTLLDNMVVGVNTGFEKKLELKGVGYRAQKQGKKLVMNLGFSHPVEMEDPEGITVEAPNQTELIVKGIDKQLVGNYAAKIRAWRKPEPYKGKGIKYVDEVIRRKEGKTGKK.

This sequence belongs to the universal ribosomal protein uL6 family. Part of the 50S ribosomal subunit.

This protein binds to the 23S rRNA, and is important in its secondary structure. It is located near the subunit interface in the base of the L7/L12 stalk, and near the tRNA binding site of the peptidyltransferase center. The protein is Large ribosomal subunit protein uL6 of Clostridioides difficile (strain 630) (Peptoclostridium difficile).